Consider the following 145-residue polypeptide: Hemoglobin subunit beta-A (145 aa).

Residues 1–145 (MLTAEEKAAV…VANALAHRYH (145 aa)) enclose the Globin domain. H62 and H91 together coordinate heme b.

This sequence belongs to the globin family. As to quaternary structure, heterotetramer of two alpha chains and two beta chains. In terms of tissue distribution, red blood cells.

Its function is as follows. Involved in oxygen transport from the lung to the various peripheral tissues. This is Hemoglobin subunit beta-A from Capra hircus (Goat).